A 346-amino-acid polypeptide reads, in one-letter code: Carbamoyl phosphate synthase small chain (346 aa).

Residues 1–160 (MEDGSVFAGR…SVKEPVLLGE (160 aa)) are CPSase. Residues Ser39, Gly209, and Gly211 each contribute to the L-glutamine site. The region spanning 164-346 (CIGVVDCGVK…FLKLVERHGH (183 aa)) is the Glutamine amidotransferase type-1 domain. The Nucleophile role is filled by Cys237. Residues Leu238, Gln241, Asn280, Gly282, and Tyr283 each contribute to the L-glutamine site. Catalysis depends on residues His320 and Glu322.

The protein belongs to the CarA family. Composed of two chains; the small (or glutamine) chain promotes the hydrolysis of glutamine to ammonia, which is used by the large (or ammonia) chain to synthesize carbamoyl phosphate. Tetramer of heterodimers (alpha,beta)4.

It carries out the reaction hydrogencarbonate + L-glutamine + 2 ATP + H2O = carbamoyl phosphate + L-glutamate + 2 ADP + phosphate + 2 H(+). The enzyme catalyses L-glutamine + H2O = L-glutamate + NH4(+). It functions in the pathway amino-acid biosynthesis; L-arginine biosynthesis; carbamoyl phosphate from bicarbonate: step 1/1. Its pathway is pyrimidine metabolism; UMP biosynthesis via de novo pathway; (S)-dihydroorotate from bicarbonate: step 1/3. In terms of biological role, small subunit of the glutamine-dependent carbamoyl phosphate synthetase (CPSase). CPSase catalyzes the formation of carbamoyl phosphate from the ammonia moiety of glutamine, carbonate, and phosphate donated by ATP, constituting the first step of 2 biosynthetic pathways, one leading to arginine and/or urea and the other to pyrimidine nucleotides. The small subunit (glutamine amidotransferase) binds and cleaves glutamine to supply the large subunit with the substrate ammonia. The polypeptide is Carbamoyl phosphate synthase small chain (Pyrobaculum aerophilum (strain ATCC 51768 / DSM 7523 / JCM 9630 / CIP 104966 / NBRC 100827 / IM2)).